The sequence spans 164 residues: ATP synthase subunit b (164 aa).

The helical transmembrane segment at 6–26 (GELVGNFILVTGSVIVLLLLI) threads the bilayer.

It belongs to the ATPase B chain family. F-type ATPases have 2 components, F(1) - the catalytic core - and F(0) - the membrane proton channel. F(1) has five subunits: alpha(3), beta(3), gamma(1), delta(1), epsilon(1). F(0) has three main subunits: a(1), b(2) and c(10-14). The alpha and beta chains form an alternating ring which encloses part of the gamma chain. F(1) is attached to F(0) by a central stalk formed by the gamma and epsilon chains, while a peripheral stalk is formed by the delta and b chains.

Its subcellular location is the cell membrane. F(1)F(0) ATP synthase produces ATP from ADP in the presence of a proton or sodium gradient. F-type ATPases consist of two structural domains, F(1) containing the extramembraneous catalytic core and F(0) containing the membrane proton channel, linked together by a central stalk and a peripheral stalk. During catalysis, ATP synthesis in the catalytic domain of F(1) is coupled via a rotary mechanism of the central stalk subunits to proton translocation. Its function is as follows. Component of the F(0) channel, it forms part of the peripheral stalk, linking F(1) to F(0). The chain is ATP synthase subunit b from Streptococcus pyogenes serotype M1.